A 230-amino-acid polypeptide reads, in one-letter code: Urease accessory protein UreG (230 aa).

33–40 is a GTP binding site; sequence GPVGSGKT.

This sequence belongs to the SIMIBI class G3E GTPase family. UreG subfamily. Homodimer. UreD, UreF and UreG form a complex that acts as a GTP-hydrolysis-dependent molecular chaperone, activating the urease apoprotein by helping to assemble the nickel containing metallocenter of UreC. The UreE protein probably delivers the nickel.

The protein resides in the cytoplasm. Its function is as follows. Facilitates the functional incorporation of the urease nickel metallocenter. This process requires GTP hydrolysis, probably effectuated by UreG. This is Urease accessory protein UreG from Mycobacteroides abscessus (strain ATCC 19977 / DSM 44196 / CCUG 20993 / CIP 104536 / JCM 13569 / NCTC 13031 / TMC 1543 / L948) (Mycobacterium abscessus).